Here is a 186-residue protein sequence, read N- to C-terminus: Guanylate kinase (186 aa).

The Guanylate kinase-like domain maps to 4 to 182 (GKLIVLTGPS…TLQNLDKILF (179 aa)). ATP is bound at residue 11 to 18 (GPSGVGKG).

Belongs to the guanylate kinase family.

The protein resides in the cytoplasm. The enzyme catalyses GMP + ATP = GDP + ADP. Its function is as follows. Essential for recycling GMP and indirectly, cGMP. The protein is Guanylate kinase of Trichodesmium erythraeum (strain IMS101).